The sequence spans 169 residues: Podoplanin (169 aa).

The first 22 residues, 1–22 (MWRVPVLLLVLGGAGLRVPAAG), serve as a signal peptide directing secretion. The Extracellular portion of the chain corresponds to 23–138 (ASTVRPDDII…EKDGLATVTL (116 aa)). O-linked (GalNAc...) threonine glycosylation occurs at Thr-25. A disordered region spans residues 37–69 (DSVVTPGTEDSVVTPGAEDNVVTDGATEEPYES). O-linked (GalNAc...) serine glycosylation is present at Ser-38. O-linked (GalNAc...) threonine glycans are attached at residues Thr-41 and Thr-44. O-linked (GalNAc...) serine glycosylation is present at Ser-47. Thr-50, Thr-59, Thr-63, Thr-72, Thr-76, Thr-79, Thr-83, Thr-92, Thr-96, Thr-106, Thr-107, Thr-108, Thr-113, Thr-126, and Thr-127 each carry an O-linked (GalNAc...) threonine glycan. Residues 139 to 159 (VGIIVGVLLAIGFIGGIIIVV) traverse the membrane as a helical segment. Residues 140-144 (GIIVG) form a requires for dimerization and lipid rafts association region. The Cytoplasmic portion of the chain corresponds to 160–169 (ARKMSGRYSP). The tract at residues 161–162 (RK) is requires for interaction with MSN and EZR.

This sequence belongs to the podoplanin family. Homodimer. Interacts with CLEC1B; the interaction is independent of CLEC1B glycosylation and activates CLEC1B; the interaction is dependent of sialic acid on O-glycans. Interacts with CD9; this interaction is homophilic and attenuates platelet aggregation and pulmonary metastasis induced by PDPN. Interacts with LGALS8; the interaction is glycosylation-dependent; may participate in connection of the lymphatic endothelium to the surrounding extracellular matrix. Interacts with HSPA9. Interacts (via extracellular domain) with CD44; this interaction is required for PDPN-mediated directional migration and regulation of lamellipodia extension/stabilization during cell spreading and migration. Interacts (via cytoplasmic domain) with MSN and EZR; activates RHOA and promotes epithelial-mesenchymal transition. Interacts with CCL21; relocalized PDPN to the basolateral membrane. Extensively O-glycosylated. Contains sialic acid residues. O-glycosylation is necessary for platelet aggregation activity. Disialylated at Thr-59; sialic acid is critical for platelet-aggregating activity and for CLEC1B interaction. Post-translationally, the N-terminus is blocked.

It is found in the membrane. Its subcellular location is the cell projection. The protein localises to the filopodium membrane. The protein resides in the lamellipodium membrane. It localises to the microvillus membrane. It is found in the ruffle membrane. Its subcellular location is the membrane raft. The protein localises to the apical cell membrane. The protein resides in the basolateral cell membrane. It localises to the invadopodium. Mediates effects on cell migration and adhesion through its different partners. During development plays a role in blood and lymphatic vessels separation by binding CLEC1B, triggering CLEC1B activation in platelets and leading to platelet activation and/or aggregation. Interaction with CD9, on the contrary, attenuates platelet aggregation and pulmonary metastasis induced by PDPN. Mediates effects on cell migration and adhesion through its different partners. Through MSN or EZR interaction promotes epithelial-mesenchymal transition (EMT) leading to ERZ phosphorylation and triggering RHOA activation leading to cell migration increase and invasiveness. Interaction with CD44 promotes directional cell migration in epithelial and tumor cells. In lymph nodes (LNs), controls fibroblastic reticular cells (FRCs) adhesion to the extracellular matrix (ECM) and contraction of the actomyosin by maintaining ERM proteins (EZR; MSN and RDX) and MYL9 activation through association with unknown transmembrane proteins. Engagement of CLEC1B by PDPN promotes FRCs relaxation by blocking lateral membrane interactions leading to reduction of ERM proteins (EZR; MSN and RDX) and MYL9 activation. Through binding with LGALS8 may participate in connection of the lymphatic endothelium to the surrounding extracellular matrix. In keratinocytes, induces changes in cell morphology showing an elongated shape, numerous membrane protrusions, major reorganization of the actin cytoskeleton, increased motility and decreased cell adhesion. Controls invadopodia stability and maturation leading to efficient degradation of the extracellular matrix (ECM) in tumor cells through modulation of RHOC activity in order to activate ROCK1/ROCK2 and LIMK1/LIMK2 and inactivation of CFL1. Required for normal lung cell proliferation and alveolus formation at birth. Does not function as a water channel or as a regulator of aquaporin-type water channels. Does not have any effect on folic acid or amino acid transport. This chain is Podoplanin (PDPN), found in Canis lupus familiaris (Dog).